The following is a 606-amino-acid chain: DNA mismatch repair protein MutL (606 aa).

A disordered region spans residues 350–371 (GWRPSAPSAPWTPEASPSRPYQ).

This sequence belongs to the DNA mismatch repair MutL/HexB family.

Functionally, this protein is involved in the repair of mismatches in DNA. It is required for dam-dependent methyl-directed DNA mismatch repair. May act as a 'molecular matchmaker', a protein that promotes the formation of a stable complex between two or more DNA-binding proteins in an ATP-dependent manner without itself being part of a final effector complex. The sequence is that of DNA mismatch repair protein MutL from Rhizobium rhizogenes (strain K84 / ATCC BAA-868) (Agrobacterium radiobacter).